An 83-amino-acid polypeptide reads, in one-letter code: Large ribosomal subunit protein eL14 (83 aa).

This sequence belongs to the eukaryotic ribosomal protein eL14 family.

The chain is Large ribosomal subunit protein eL14 from Thermococcus onnurineus (strain NA1).